We begin with the raw amino-acid sequence, 439 residues long: Protease Do-like 1, chloroplastic (439 aa).

The serine protease stretch occupies residues 154–323; it reads QGSGSGFVWD…IPVDTVGGIV (170 aa). Residues His173, Asp203, and Ser282 each act as charge relay system in the active site. Positions 326 to 423 constitute a PDZ domain; the sequence is LVRFGKVTRP…EVTVEVLRGD (98 aa).

It belongs to the peptidase S1C family. As to quaternary structure, interacts with PTAC16 and other potential targets for degradation under high light conditions.

The protein localises to the plastid. It is found in the chloroplast thylakoid membrane. Its activity is regulated as follows. Inhibited by phenylmethylsulfonyl fluoride and O-phenanthroline. Serine protease that is required at high temperature. May be involved in the degradation of damaged proteins. In vivo, can degrade beta-casein. In Arabidopsis thaliana (Mouse-ear cress), this protein is Protease Do-like 1, chloroplastic (DEGP1).